The chain runs to 891 residues: DNA mismatch repair protein MutS (891 aa).

646–653 serves as a coordination point for ATP; sequence GPNMAGKS.

Belongs to the DNA mismatch repair MutS family.

In terms of biological role, this protein is involved in the repair of mismatches in DNA. It is possible that it carries out the mismatch recognition step. This protein has a weak ATPase activity. This chain is DNA mismatch repair protein MutS, found in Rickettsia typhi (strain ATCC VR-144 / Wilmington).